The sequence spans 199 residues: Dephospho-CoA kinase (199 aa).

Residues 3–199 (ILGLTGSIGM…EVVKMPQRRA (197 aa)) form the DPCK domain. 11–16 (GMGKST) contacts ATP.

Belongs to the CoaE family.

The protein resides in the cytoplasm. It catalyses the reaction 3'-dephospho-CoA + ATP = ADP + CoA + H(+). Its pathway is cofactor biosynthesis; coenzyme A biosynthesis; CoA from (R)-pantothenate: step 5/5. In terms of biological role, catalyzes the phosphorylation of the 3'-hydroxyl group of dephosphocoenzyme A to form coenzyme A. This Bradyrhizobium diazoefficiens (strain JCM 10833 / BCRC 13528 / IAM 13628 / NBRC 14792 / USDA 110) protein is Dephospho-CoA kinase.